A 288-amino-acid chain; its full sequence is Syntaxin-1A (288 aa).

Basic and acidic residues predominate over residues 1-13 (MKDRTQELRTAKD). Residues 1 to 20 (MKDRTQELRTAKDSDDDDDV) are disordered. Residues 1–265 (MKDRTQELRT…KYQSKARRKK (265 aa)) are Cytoplasmic-facing. Phosphoserine occurs at positions 14, 64, and 95. A coiled-coil region spans residues 68 to 109 (DEKTKEELEELMSDIKKTANKVRSKLKSIEQSIEQEEGLNRS). At serine 188 the chain carries Phosphoserine; by DAPK1. One can recognise a t-SNARE coiled-coil homology domain in the interval 192 to 254 (LSEIETRHSE…ERAVSDTKKA (63 aa)). Residues lysine 252, lysine 253, and lysine 256 each participate in a glycyl lysine isopeptide (Lys-Gly) (interchain with G-Cter in SUMO) cross-link. Residues 266-286 (IMIIICCVILGIIIASTIGGI) traverse the membrane as a helical; Anchor for type IV membrane protein segment. The Extracellular segment spans residues 287–288 (FG).

The protein belongs to the syntaxin family. As to quaternary structure, part of the SNARE core complex containing SNAP25, VAMP2 and STX1A; this complex constitutes the basic catalytic machinery of the complex neurotransmitter release apparatus. The SNARE complex interacts with CPLX1. Interacts with STXBP1. The interaction with STXBP1 promotes assembly of the SNARE complex. Interacts (via C-terminus) with KCNB1 (via C-terminus); the interaction increases in a calcium-dependent manner and induces a pore-independent enhancement of exocytosis in neuroendocrine cells, chromaffin cells, pancreatic beta cells and from the soma of dorsal root ganglia (DRG) neurons. Interacts with SYTL4. Interacts with STXBP6. Interacts with PLCL1 (via C2 domain). Interacts with OTOF. Interacts with LGI3. Interacts (via the H3 domain) with SLC6A4 (via the N-terminus); this interaction regulates SLC4A6 channel conductance in thalamocortical neurons. Interacts with SYT6 and SYT8; the interaction is Ca(2+)-dependent. Interacts with VAMP8. Interacts with SNAP23. Interacts with VAPA and SYBU. Interacts with PRRT2. Interacts with SEPT8. Interacts with STXBP5L. Interacts with synaptotagmin-1/SYT1. Interacts with SEPTIN5; in the cerebellar cortex. Interacts with SEPTIN4; in the striatum. Post-translationally, phosphorylated by CK2. Phosphorylation at Ser-188 by DAPK1 significantly decreases its interaction with STXBP1. In terms of processing, phosphorylated by CK2. Phosphorylation at Ser-188 by DAPK1 significantly decreases its interaction with STXBP1. Sumoylated, sumoylation is required for regulation of synaptic vesicle endocytosis. In terms of tissue distribution, expressed in the striatum (at protein level). Expressed in the ileum.

It localises to the cytoplasmic vesicle. The protein resides in the secretory vesicle. It is found in the synaptic vesicle membrane. The protein localises to the synapse. Its subcellular location is the synaptosome. It localises to the cell membrane. Functionally, plays an essential role in hormone and neurotransmitter calcium-dependent exocytosis and endocytosis. Part of the SNARE (Soluble NSF Attachment Receptor) complex composed of SNAP25, STX1A and VAMP2 which mediates the fusion of synaptic vesicles with the presynaptic plasma membrane. STX1A and SNAP25 are localized on the plasma membrane while VAMP2 resides in synaptic vesicles. The pairing of the three SNAREs from the N-terminal SNARE motifs to the C-terminal anchors leads to the formation of the SNARE complex, which brings membranes into close proximity and results in final fusion. Participates in the calcium-dependent regulation of acrosomal exocytosis in sperm. Also plays an important role in the exocytosis of hormones such as insulin or glucagon-like peptide 1 (GLP-1). The polypeptide is Syntaxin-1A (Stx1a) (Mus musculus (Mouse)).